We begin with the raw amino-acid sequence, 566 residues long: Osteoclast stimulatory transmembrane protein (566 aa).

The Cytoplasmic portion of the chain corresponds to 1-51; it reads MPGHPGAAEQLVKTGWRSWHLGFWKALAPLQAAWDAFSQPVPASCGQLLTQ. Residues 52–72 form a helical membrane-spanning segment; that stretch reads LLLCASLAAAAAGLVYHWLAS. The Extracellular portion of the chain corresponds to 73-81; that stretch reads LLLYPPGPS. Residues 82–102 form a helical membrane-spanning segment; that stretch reads AMVATVCGLLVFLSLGLVPPV. Topologically, residues 103–128 are cytoplasmic; the sequence is RCLFALSVPTLGMEQGRRLLLSYSTA. The helical transmembrane segment at 129–149 threads the bilayer; sequence TLAIAVVPNVLANVGAAGQVL. The Extracellular portion of the chain corresponds to 150 to 227; the sequence is RCVTEGSLES…ARAAALGTQR (78 aa). The helical transmembrane segment at 228–248 threads the bilayer; the sequence is VVTGLFMLGLLVESAWYLHCY. Residues 249–304 lie on the Cytoplasmic side of the membrane; the sequence is LTDLRFDNIYATQQLTQRLAQAQATHLLAPPPTWLLQAAQLRLSQEELLSCLLRLG. A helical transmembrane segment spans residues 305–325; that stretch reads LLALLLVATAVAVATDHVAFL. Over 326–398 the chain is Extracellular; sequence LAQATVDWAQ…CPLLPARRPR (73 aa). The chain crosses the membrane as a helical span at residues 399–419; it reads AAAPLAAGALQLLAGSTVLLE. Residues 420–566 are Cytoplasmic-facing; sequence AYARRLRHAI…EGNTGHDRPG (147 aa).

The protein resides in the membrane. In terms of biological role, probable cell surface receptor that plays a role in cellular fusion and cell differentiation. Cooperates with DCSTAMP in modulating cell-cell fusion in both osteoclasts and foreign body giant cells (FBGCs). Involved in osteoclast bone resorption. Promotes osteoclast differentiation and may play a role in the multinucleated osteoclast maturation. The chain is Osteoclast stimulatory transmembrane protein (OCSTAMP) from Homo sapiens (Human).